Reading from the N-terminus, the 376-residue chain is Heme chaperone HemW (376 aa).

In terms of domain architecture, Radical SAM core spans 1–233 (MFTLPPISLY…DKLLKKAGYK (233 aa)). S-adenosyl-L-methionine is bound at residue Y10. 3 residues coordinate [4Fe-4S] cluster: C16, C20, and C23. Residues G66, 67 to 68 (GT), E99, Q126, R138, and D162 contribute to the S-adenosyl-L-methionine site.

This sequence belongs to the anaerobic coproporphyrinogen-III oxidase family. HemW subfamily. The cofactor is [4Fe-4S] cluster.

The protein resides in the cytoplasm. Functionally, probably acts as a heme chaperone, transferring heme to an unknown acceptor. Binds one molecule of heme per monomer, possibly covalently. Binds 1 [4Fe-4S] cluster. The cluster is coordinated with 3 cysteines and an exchangeable S-adenosyl-L-methionine. This is Heme chaperone HemW from Buchnera aphidicola subsp. Acyrthosiphon pisum (strain APS) (Acyrthosiphon pisum symbiotic bacterium).